The primary structure comprises 308 residues: UDP-N-acetylenolpyruvoylglucosamine reductase (308 aa).

Residues 30–213 (RVGGAAEWFI…KATTQSHLDH (184 aa)) enclose the FAD-binding PCMH-type domain. Arginine 176 is a catalytic residue. Serine 227 functions as the Proton donor in the catalytic mechanism. Residue glutamate 297 is part of the active site.

Belongs to the MurB family. The cofactor is FAD.

The protein resides in the cytoplasm. It carries out the reaction UDP-N-acetyl-alpha-D-muramate + NADP(+) = UDP-N-acetyl-3-O-(1-carboxyvinyl)-alpha-D-glucosamine + NADPH + H(+). It functions in the pathway cell wall biogenesis; peptidoglycan biosynthesis. In terms of biological role, cell wall formation. The protein is UDP-N-acetylenolpyruvoylglucosamine reductase of Acaryochloris marina (strain MBIC 11017).